A 148-amino-acid polypeptide reads, in one-letter code: Snaclec 27 (148 aa).

A signal peptide spans 1–23 (WGDSSSSASACWSCFSLVSGIGA). Disulfide bonds link Cys-27-Cys-38, Cys-55-Cys-144, and Cys-121-Cys-136. The region spanning 34–145 (HEGHCYKVFS…CSSTQQFVCK (112 aa)) is the C-type lectin domain.

It belongs to the snaclec family. Heterodimer; disulfide-linked. As to expression, expressed by the venom gland.

The protein localises to the secreted. Its function is as follows. Interferes with one step of hemostasis (modulation of platelet aggregation, or coagulation cascade, for example). The polypeptide is Snaclec 27 (Echis ocellatus (Ocellated saw-scaled viper)).